The chain runs to 493 residues: Acetylcholine receptor subunit beta (493 aa).

Positions 1-24 (MENVRRMALGLVVMMALALSGVGA) are cleaved as a signal peptide. The Extracellular segment spans residues 25-240 (SVMEDTLLSV…VTFYLIIQRK (216 aa)). A disulfide bridge links Cys152 with Cys166. Asn165 carries an N-linked (GlcNAc...) asparagine glycan. Transmembrane regions (helical) follow at residues 241–265 (PLFY…VFYL), 273–291 (MSLS…LLLA), and 307–328 (YLMF…VLNL). Topologically, residues 329 to 461 (HHRSPNTHTM…WQYVAMVADR (133 aa)) are cytoplasmic. A Phosphotyrosine; by Tyr-kinases modification is found at Tyr379. A helical transmembrane segment spans residues 462 to 480 (LFLYVFFVICSIGTFSIFL).

The protein belongs to the ligand-gated ion channel (TC 1.A.9) family. Acetylcholine receptor (TC 1.A.9.1) subfamily. Beta-1/CHRNB1 sub-subfamily. Pentamer of two alpha chains, and one each of the beta, delta, and gamma chains.

It is found in the postsynaptic cell membrane. It localises to the cell membrane. It carries out the reaction K(+)(in) = K(+)(out). The catalysed reaction is Na(+)(in) = Na(+)(out). Its function is as follows. After binding acetylcholine, the AChR responds by an extensive change in conformation that affects all subunits and leads to opening of an ion-conducting channel across the plasma membrane. This chain is Acetylcholine receptor subunit beta (CHRNB1), found in Tetronarce californica (Pacific electric ray).